A 100-amino-acid polypeptide reads, in one-letter code: Large ribosomal subunit protein uL23 (100 aa).

The protein belongs to the universal ribosomal protein uL23 family. Part of the 50S ribosomal subunit. Contacts protein L29, and trigger factor when it is bound to the ribosome.

In terms of biological role, one of the early assembly proteins it binds 23S rRNA. One of the proteins that surrounds the polypeptide exit tunnel on the outside of the ribosome. Forms the main docking site for trigger factor binding to the ribosome. The protein is Large ribosomal subunit protein uL23 of Pectobacterium atrosepticum (strain SCRI 1043 / ATCC BAA-672) (Erwinia carotovora subsp. atroseptica).